A 276-amino-acid chain; its full sequence is Large ribosomal subunit protein uL2c (276 aa).

Disordered stretches follow at residues 1-51 (MAIR…GIIT) and 224-276 (VVMN…RRRK). 2 stretches are compositionally biased toward polar residues: residues 7-18 (RTYTPSTRNRPI) and 27-37 (SNPQKKLTSGQ).

This sequence belongs to the universal ribosomal protein uL2 family. In terms of assembly, part of the 50S ribosomal subunit.

Its subcellular location is the plastid. It is found in the chloroplast. This chain is Large ribosomal subunit protein uL2c (rpl2), found in Cycas taitungensis (Prince sago).